Here is a 129-residue protein sequence, read N- to C-terminus: Chromatin accessibility complex protein 1 (129 aa).

Alanine 2 bears the N-acetylalanine mark. Lysine 102 carries the post-translational modification N6-acetyllysine. Positions 104 to 120 (LKMLKEKREEEEDNEDD) form a coiled coil. The segment at 109–129 (EKREEEEDNEDDGSDLGEALA) is disordered. Over residues 112-123 (EEEEDNEDDGSD) the composition is skewed to acidic residues. A Phosphoserine modification is found at serine 122.

As to quaternary structure, heterodimer with POLE3; binds to DNA. Component of the CHRAC ISWI chromatin remodeling complex at least composed of SMARCA5/SNF2H, BAZ1A/ACF1, CHRAC1 and POLE3; the complex preferentially binds DNA through the CHRAC1-POLE3 heterodimer and possesses ATP-dependent nucleosome-remodeling activity. Within the complex, the heterodimer with POLE3 interacts with SMARCA5/SNF2H; the interaction is direct and enhances nucleosome sliding activity by the SMARCA5/SNF2H and BAZ1A/ACF1 interaction. Within the complex, the heterodimer with POLE3 interacts with BAZ1A/ACF1; the interactions are direct. As to expression, ubiquitously expressed.

The protein resides in the nucleus. Forms a complex with DNA polymerase epsilon subunit POLE3 and binds naked DNA, which is then incorporated into chromatin, aided by the nucleosome remodeling activity of ISWI/SNF2H and ACF1. Does not enhance nucleosome sliding activity of the ACF-5 ISWI chromatin remodeling complex. The polypeptide is Chromatin accessibility complex protein 1 (Chrac1) (Mus musculus (Mouse)).